The primary structure comprises 69 residues: DNA-directed RNA polymerase subunit omega (69 aa).

Belongs to the RNA polymerase subunit omega family. The RNAP catalytic core consists of 2 alpha, 1 beta, 1 beta' and 1 omega subunit. When a sigma factor is associated with the core the holoenzyme is formed, which can initiate transcription.

It carries out the reaction RNA(n) + a ribonucleoside 5'-triphosphate = RNA(n+1) + diphosphate. Its function is as follows. Promotes RNA polymerase assembly. Latches the N- and C-terminal regions of the beta' subunit thereby facilitating its interaction with the beta and alpha subunits. In Exiguobacterium sp. (strain ATCC BAA-1283 / AT1b), this protein is DNA-directed RNA polymerase subunit omega.